Consider the following 322-residue polypeptide: Homeobox protein DBX1-B (322 aa).

A DNA-binding region (homeobox) is located at residues 179–238 (GMLRRAVFSDVQRKALEKMFQKQKYISKPDRKKLATKLGLKDSQVKIWFQNRRMKWRNSK). Disordered stretches follow at residues 238-266 (KERE…LSDV) and 296-322 (DLHF…ITVS). Over residues 312–322 (SESEDEEITVS) the composition is skewed to acidic residues.

Belongs to the H2.0 homeobox family.

The protein localises to the nucleus. The chain is Homeobox protein DBX1-B (dbx1b) from Danio rerio (Zebrafish).